Consider the following 198-residue polypeptide: MKYPPSLVSLIRELSRLPGIGPKSAQRLAFHLFEQPREDIERLAGALLAAKRDLHTCPVCFNITDAERCDVCSDPSRDQNLICVVEEPGDVIAIERSGEYRGLYHVLHGVLSPMNGVGPEKLHIKPLLPRVQEGQEIILATGTTVEGDATALYLQRLLEPLGAVVSRIAYGLPVGGALEYADEVTLGRALTGRQRVSK.

Residues 57 to 72 (CPVCFNITDAERCDVC) form a C4-type zinc finger. Residues 80–173 (NLICVVEEPG…VVSRIAYGLP (94 aa)) form the Toprim domain.

Belongs to the RecR family.

May play a role in DNA repair. It seems to be involved in an RecBC-independent recombinational process of DNA repair. It may act with RecF and RecO. In Deinococcus deserti (strain DSM 17065 / CIP 109153 / LMG 22923 / VCD115), this protein is Recombination protein RecR.